The following is a 243-amino-acid chain: Nuclear ubiquitous casein and cyclin-dependent kinase substrate 1 (243 aa).

Residues 1-243 form a disordered region; that stretch reads MSRPVRNRKV…SEDDAQSGED (243 aa). Residue Y13 is modified to Phosphotyrosine. Residues S14 and S19 each carry the phosphoserine modification. The residue at position 26 (Y26) is a Phosphotyrosine. Residues 35–51 are compositionally biased toward basic residues; it reads KKIRSSPREAKNKRRSG. S54, S58, S61, S73, S75, and S79 each carry phosphoserine. The span at 64–77 shows a compositional bias: basic and acidic residues; that stretch reads KDVKTKKDDSHSAE. A compositionally biased stretch (low complexity) spans 91-100; that stretch reads QQRQAASKAA. The span at 111-124 shows a compositional bias: acidic residues; it reads VGSEEEQEEEDEAP. 4 positions are modified to phosphoserine: S113, S130, S132, and S144. A compositionally biased stretch (acidic residues) spans 132-145; sequence SDEDFLVEDDDDSD. Basic residues predominate over residues 149–174; sequence SKKKNKKMVKKSKPERKEKKMPKPRL. A Phosphothreonine modification is found at T179. A Phosphoserine modification is found at S181. Over residues 197-206 the composition is skewed to basic and acidic residues; that stretch reads ASKEKTPSPK. At T202 the chain carries Phosphothreonine. A phosphoserine mark is found at S204, S214, S223, S229, S234, and S240. Residues 232–243 are compositionally biased toward acidic residues; it reads EGSEDDAQSGED.

In terms of assembly, does not interact with RAD51. Post-translationally, phosphorylated in an ATM-dependent manner in response to DNA damage. Phosphorylated by CDK1 and casein kinase.

It is found in the nucleus. The protein resides in the chromosome. In terms of biological role, chromatin-associated protein involved in DNA repair by promoting homologous recombination (HR). Binds double-stranded DNA (dsDNA) and secondary DNA structures, such as D-loop structures, but with less affinity than RAD51AP1. The polypeptide is Nuclear ubiquitous casein and cyclin-dependent kinase substrate 1 (NUCKS1) (Bos taurus (Bovine)).